A 242-amino-acid polypeptide reads, in one-letter code: 1-(5-phosphoribosyl)-5-[(5-phosphoribosylamino)methylideneamino] imidazole-4-carboxamide isomerase (242 aa).

The Proton acceptor role is filled by aspartate 10. Aspartate 131 serves as the catalytic Proton donor.

The protein belongs to the HisA/HisF family.

The protein localises to the cytoplasm. It carries out the reaction 1-(5-phospho-beta-D-ribosyl)-5-[(5-phospho-beta-D-ribosylamino)methylideneamino]imidazole-4-carboxamide = 5-[(5-phospho-1-deoxy-D-ribulos-1-ylimino)methylamino]-1-(5-phospho-beta-D-ribosyl)imidazole-4-carboxamide. It functions in the pathway amino-acid biosynthesis; L-histidine biosynthesis; L-histidine from 5-phospho-alpha-D-ribose 1-diphosphate: step 4/9. The sequence is that of 1-(5-phosphoribosyl)-5-[(5-phosphoribosylamino)methylideneamino] imidazole-4-carboxamide isomerase from Granulibacter bethesdensis (strain ATCC BAA-1260 / CGDNIH1).